The sequence spans 444 residues: Glutamyl-tRNA reductase (444 aa).

Substrate-binding positions include 41-44 (TCNR), Ser102, 107-109 (ERE), and Gln113. The active-site Nucleophile is the Cys42. 181–186 (GTGSYA) is a binding site for NADP(+).

The protein belongs to the glutamyl-tRNA reductase family. Homodimer.

It carries out the reaction (S)-4-amino-5-oxopentanoate + tRNA(Glu) + NADP(+) = L-glutamyl-tRNA(Glu) + NADPH + H(+). Its pathway is porphyrin-containing compound metabolism; protoporphyrin-IX biosynthesis; 5-aminolevulinate from L-glutamyl-tRNA(Glu): step 1/2. Its function is as follows. Catalyzes the NADPH-dependent reduction of glutamyl-tRNA(Glu) to glutamate 1-semialdehyde (GSA). This is Glutamyl-tRNA reductase from Cutibacterium acnes (strain DSM 16379 / KPA171202) (Propionibacterium acnes).